The primary structure comprises 168 residues: Plastocyanin, chloroplastic (168 aa).

In terms of domain architecture, Plastocyanin-like spans V70–N168. Residues H106, C153, H156, and M161 each coordinate Cu cation.

The protein belongs to the plastocyanin family. The cofactor is Cu(2+).

The protein localises to the plastid. Its subcellular location is the chloroplast thylakoid membrane. Functionally, participates in electron transfer between P700 and the cytochrome b6-f complex in photosystem I. This Spinacia oleracea (Spinach) protein is Plastocyanin, chloroplastic (PETE).